The sequence spans 267 residues: Large ribosomal subunit protein uL2c (267 aa).

This sequence belongs to the universal ribosomal protein uL2 family. As to quaternary structure, part of the 50S ribosomal subunit.

It localises to the plastid. The protein resides in the apicoplast. This is Large ribosomal subunit protein uL2c (rpl2) from Toxoplasma gondii.